Here is a 248-residue protein sequence, read N- to C-terminus: PF03932 family protein CutC (248 aa).

Belongs to the CutC family. In terms of assembly, homodimer.

The protein resides in the cytoplasm. In Salmonella schwarzengrund (strain CVM19633), this protein is PF03932 family protein CutC.